Consider the following 446-residue polypeptide: Elongation factor Ts, mitochondrial (446 aa).

A mitochondrion-targeting transit peptide spans 1-33; sequence MSGSRSALSVVRLAACAKPCTLGSTSSVLTRPF.

Belongs to the EF-Ts family.

The protein localises to the mitochondrion. In terms of biological role, associates with the EF-Tu.GDP complex and induces the exchange of GDP to GTP. It remains bound to the aminoacyl-tRNA.EF-Tu.GTP complex up to the GTP hydrolysis stage on the ribosome. The sequence is that of Elongation factor Ts, mitochondrial from Mycosarcoma maydis (Corn smut fungus).